The sequence spans 168 residues: Photosystem I assembly protein Ycf3 (168 aa).

TPR repeat units lie at residues 35–68 (AFTYYRDGMSAQSEGNYAEALQNYYEAMRLEIDP), 72–105 (SYILYNIGLIHTSNGEHTKALEYYFRALERNPFL), and 120–153 (GEQAIQQGDSEIAEAWFDQAAEYWKQAIALTPGN).

This sequence belongs to the Ycf3 family.

It localises to the plastid. The protein localises to the chloroplast thylakoid membrane. Essential for the assembly of the photosystem I (PSI) complex. May act as a chaperone-like factor to guide the assembly of the PSI subunits. This is Photosystem I assembly protein Ycf3 from Atropa belladonna (Belladonna).